The sequence spans 322 residues: Transcriptional activator protein Pur-alpha (322 aa).

A disordered region spans residues 1–55 (MADRDSGSEQGGAALGSGGSLGHPGSGSGSGGGGGGGGGGGGSGGGGGGAPGGLQ). Ala2 bears the N-acetylalanine mark. The segment covering 9–52 (EQGGAALGSGGSLGHPGSGSGSGGGGGGGGGGGGSGGGGGGAPG) has biased composition (gly residues). One copy of the PUR repeat I repeat lies at 60–125 (ELASKRVDIQ…DFIEHYAQLG (66 aa)). Residues 142–213 (ALKSEFLVRE…KLIDDYGVEE (72 aa)) form a PUR repeat II repeat. At Ser182 the chain carries Phosphoserine. Residues 215-281 (PAELPEGTSL…CKYSEEMKKI (67 aa)) form a PUR repeat III repeat. The segment covering 295–314 (LHQQQQQQQEETAAATLLLQ) has biased composition (low complexity). The segment at 295–322 (LHQQQQQQQEETAAATLLLQGEEEGEED) is disordered.

It belongs to the PUR DNA-binding protein family. In terms of assembly, homodimer, heterodimer with PURB and heterotrimer with PURB and YBX1/Y-box protein 1. Interacts with FMR1; this interaction occurs in association with polyribosome.

The protein localises to the nucleus. Functionally, this is a probable transcription activator that specifically binds the purine-rich single strand of the PUR element located upstream of the MYC gene. May play a role in the initiation of DNA replication and in recombination. The protein is Transcriptional activator protein Pur-alpha (PURA) of Homo sapiens (Human).